The following is a 363-amino-acid chain: Phosphoserine aminotransferase (363 aa).

Arg42 provides a ligand contact to L-glutamate. Residues 76–77 (AS), Trp101, Thr151, Asp170, and Gln193 contribute to the pyridoxal 5'-phosphate site. At Lys194 the chain carries N6-(pyridoxal phosphate)lysine. 234–235 (NT) lines the pyridoxal 5'-phosphate pocket.

It belongs to the class-V pyridoxal-phosphate-dependent aminotransferase family. SerC subfamily. In terms of assembly, homodimer. It depends on pyridoxal 5'-phosphate as a cofactor.

The protein resides in the cytoplasm. It carries out the reaction O-phospho-L-serine + 2-oxoglutarate = 3-phosphooxypyruvate + L-glutamate. The enzyme catalyses 4-(phosphooxy)-L-threonine + 2-oxoglutarate = (R)-3-hydroxy-2-oxo-4-phosphooxybutanoate + L-glutamate. The protein operates within amino-acid biosynthesis; L-serine biosynthesis; L-serine from 3-phospho-D-glycerate: step 2/3. Its function is as follows. Catalyzes the reversible conversion of 3-phosphohydroxypyruvate to phosphoserine and of 3-hydroxy-2-oxo-4-phosphonooxybutanoate to phosphohydroxythreonine. The chain is Phosphoserine aminotransferase from Listeria monocytogenes serotype 4b (strain F2365).